Reading from the N-terminus, the 384-residue chain is Chaperone protein DnaJ 1 (384 aa).

The region spanning Asp4–Gly68 is the J domain. The CR-type zinc-finger motif lies at Gly133 to Arg215. Zn(2+)-binding residues include Cys146, Cys149, Cys163, Cys166, Cys189, Cys192, Cys203, and Cys206. CXXCXGXG motif repeat units follow at residues Cys146 to Gly153, Cys163 to Gly170, Cys189 to Gly196, and Cys203 to Gly210.

Belongs to the DnaJ family. As to quaternary structure, homodimer. Requires Zn(2+) as cofactor.

The protein resides in the cytoplasm. In terms of biological role, participates actively in the response to hyperosmotic and heat shock by preventing the aggregation of stress-denatured proteins and by disaggregating proteins, also in an autonomous, DnaK-independent fashion. Unfolded proteins bind initially to DnaJ; upon interaction with the DnaJ-bound protein, DnaK hydrolyzes its bound ATP, resulting in the formation of a stable complex. GrpE releases ADP from DnaK; ATP binding to DnaK triggers the release of the substrate protein, thus completing the reaction cycle. Several rounds of ATP-dependent interactions between DnaJ, DnaK and GrpE are required for fully efficient folding. Also involved, together with DnaK and GrpE, in the DNA replication of plasmids through activation of initiation proteins. The polypeptide is Chaperone protein DnaJ 1 (Nocardia farcinica (strain IFM 10152)).